The following is a 707-amino-acid chain: UvrABC system protein C (707 aa).

The 81-residue stretch at 14-94 folds into the GIY-YIG domain; sequence AEPGCYLMKD…IKKHRPRFNV (81 aa). In terms of domain architecture, UVR spans 206 to 241; it reads GELVERLRGRMAGAAEGLRFEEAARLRDQLQAVERS. A disordered region spans residues 655–707; sequence DAPPIAADEPSGAPAGAPGGGPAEASPEAVAAATEAEIDAALADEDASPEPAA. Composition is skewed to low complexity over residues 660–670 and 677–689; these read AADEPSGAPAG and AEAS…AATE. Residues 690–707 are compositionally biased toward acidic residues; the sequence is AEIDAALADEDASPEPAA.

It belongs to the UvrC family. Interacts with UvrB in an incision complex.

It localises to the cytoplasm. The UvrABC repair system catalyzes the recognition and processing of DNA lesions. UvrC both incises the 5' and 3' sides of the lesion. The N-terminal half is responsible for the 3' incision and the C-terminal half is responsible for the 5' incision. This chain is UvrABC system protein C, found in Anaeromyxobacter dehalogenans (strain 2CP-1 / ATCC BAA-258).